The primary structure comprises 232 residues: Expansin-YoaJ (232 aa).

The signal sequence occupies residues 1–25 (MKKIMSAFVGMVLLTIFCFSPQASA). Residues 58–127 (ITAINPADLN…MKDGKINIKW (70 aa)) form the Expansin-like EG45 domain.

It localises to the secreted. It is found in the cell wall. Functionally, may promote colonization of plant roots. May cause loosening and extension of plant cell walls by disrupting non-covalent bonding between cellulose microfibrils and matrix glucans. Has very low expansin activity (in vitro). No enzymatic activity has been found. Binds to peptidoglycan and to plant cell walls. The protein is Expansin-YoaJ (yoaJ) of Bacillus subtilis (strain 168).